A 230-amino-acid polypeptide reads, in one-letter code: Uracil-DNA glycosylase (230 aa).

Asp-70 functions as the Proton acceptor in the catalytic mechanism.

This sequence belongs to the uracil-DNA glycosylase (UDG) superfamily. UNG family.

It localises to the cytoplasm. The catalysed reaction is Hydrolyzes single-stranded DNA or mismatched double-stranded DNA and polynucleotides, releasing free uracil.. Its function is as follows. Excises uracil residues from the DNA which can arise as a result of misincorporation of dUMP residues by DNA polymerase or due to deamination of cytosine. The polypeptide is Uracil-DNA glycosylase (Pseudomonas fluorescens (strain ATCC BAA-477 / NRRL B-23932 / Pf-5)).